The following is a 215-amino-acid chain: Eukaryotic translation initiation factor 4E-1 (215 aa).

Positions 1 to 35 (MAEDTETRPASAGAEEREEGEIADDGDGSAAAAAG) are disordered. Over residues 16–27 (EREEGEIADDGD) the composition is skewed to acidic residues. EIF4G-binding stretches follow at residues 40-43 (HPLE) and 50-86 (FDNPQGKSRAVAWGSTIHPIHTFSTVEDFWSLYNNIH). MRNA is bound by residues 58–63 (RAVAWG), Lys-90, and 108–109 (WE). Cys-113 and Cys-151 are joined by a disulfide. An EIF4G-binding region spans residues 134-143 (HTLLALIGEQ). MRNA is bound by residues 158–163 (RKNQER) and 203–207 (KRSDK).

This sequence belongs to the eukaryotic initiation factor 4E family. In terms of assembly, EIF4F is a multi-subunit complex, the composition of which varies with external and internal environmental conditions. It is composed of at least EIF4A, EIF4E and EIF4G. EIF4E is also known to interact with other partners. In higher plants two isoforms of EIF4F have been identified, named isoform EIF4F and isoform EIF(iso)4F. Isoform EIF4F has subunits p220 and p26, whereas isoform EIF(iso)4F has subunits p82 and p28. (Microbial infection) Interacts with potyvirus viral genome-linked protein (VPg); this interaction is possible in susceptible hosts but impaired in resistant plants. Post-translationally, according to the redox status, the Cys-113-Cys-151 disulfide bridge may have a role in regulating protein function by affecting its ability to bind capped mRNA.

It localises to the nucleus. The protein resides in the cytoplasm. Component of the protein complex eIF4F, which is involved in the recognition of the mRNA cap, ATP-dependent unwinding of 5'-terminal secondary structure and recruitment of mRNA to the ribosome. Recognizes and binds the 7-methylguanosine-containing mRNA cap during an early step in the initiation of protein synthesis and facilitates ribosome binding by inducing the unwinding of the mRNAs secondary structures. Key component of recessive resistance to potyviruses and bymoviruses, including barley yellow mosaic virus and barley mild mosaic virus. Its function is as follows. (Microbial infection) Susceptibility host factor required for viral infection by recruiting viral RNAs to the host ribosomal complex via an interaction with viral genome-linked protein (VPg). The sequence is that of Eukaryotic translation initiation factor 4E-1 from Hordeum vulgare subsp. vulgare (Domesticated barley).